The chain runs to 344 residues: GLIPR1-like protein 2 (344 aa).

The SCP domain maps to 58 to 192 (VNLHNELRGD…IHAAIFICNY (135 aa)). The chain crosses the membrane as a helical span at residues 254-274 (TFILLLRILCFILCVITVLIV). Composition is skewed to acidic residues over residues 292–304 (EESEAGNEEEEKE) and 312–334 (EMEMEIMEMEEEKEEREEEEEET). The tract at residues 292–344 (EESEAGNEEEEKEEEKKEKEEMEMEIMEMEEEKEEREEEEEETQKEKMEEEEK) is disordered. Basic and acidic residues predominate over residues 335 to 344 (QKEKMEEEEK).

Belongs to the CRISP family. As to expression, highly expressed in testis. Detected in prostate, kidney, bladder, lung and bone marrow.

Its subcellular location is the membrane. The sequence is that of GLIPR1-like protein 2 (GLIPR1L2) from Homo sapiens (Human).